The following is a 705-amino-acid chain: Forkhead box protein P1 (705 aa).

Residues 1–19 (MMQESGSETKSNGSAIQNG) show a composition bias toward polar residues. The disordered stretch occupies residues 1–41 (MMQESGSETKSNGSAIQNGSSGGNHLLECGALRDTRSNGEA). Ser113 bears the Phosphoserine mark. 2 disordered regions span residues 267–286 (HTAE…TSTC) and 291–326 (APSK…EHPH). Composition is skewed to polar residues over residues 276 to 286 (NHSSLDLTSTC) and 291 to 311 (APSK…QLSV). Residues 314–326 (PKRESLSHEEHPH) are compositionally biased toward basic and acidic residues. Lys315 is covalently cross-linked (Glycyl lysine isopeptide (Lys-Gly) (interchain with G-Cter in SUMO2)). The C2H2-type zinc finger occupies 334–359 (GVCKWPGCEAVCDDFPAFLKHLNSEH). A leucine-zipper region spans residues 376–397 (VQQLELQLAKDKERLQAMMTHL). Residues Lys400 and Lys405 each participate in a glycyl lysine isopeptide (Lys-Gly) (interchain with G-Cter in SUMO2) cross-link. Positions 410–414 (PLNLV) are CTBP1-binding. The segment covering 418 to 431 (TLSKSASEASPQSL) has biased composition (polar residues). The interval 418–450 (TLSKSASEASPQSLPHTPTTPTAPLTPVTQGPS) is disordered. Low complexity predominate over residues 432 to 446 (PHTPTTPTAPLTPVT). Lys470 is covalently cross-linked (Glycyl lysine isopeptide (Lys-Gly) (interchain with G-Cter in SUMO2)). The segment at residues 493-583 (RPPFTYASLI…PQKISGNPSL (91 aa)) is a DNA-binding region (fork-head). Residues 639 to 705 (EHTNSNESDS…EDEPVNEDME (67 aa)) are disordered. Residues 640-651 (HTNSNESDSSPG) are compositionally biased toward polar residues. Position 681 is a phosphothreonine (Thr681). Ser686 carries the post-translational modification Phosphoserine. The segment covering 695–705 (YEDEPVNEDME) has biased composition (acidic residues).

Forms homodimers and heterodimers with FOXP2 and FOXP4. Dimerization is required for DNA-binding. Self-associates. Interacts with CTBP1. Interacts with NCOR2 and AR. Interacts with FOXP2. Interacts with TBR1. Interacts with AURKA; this interaction facilitates the phosphorylation of FOXP1, which suppresses the expression of FBXL7. Interacts with ZMYM2. As to expression, isoform 5 is specifically expressed in embryonic stem cells. Highest expression in the lung, brain, and spleen. Lower expression in heart, skeletal muscle, kidney, small intestine (isoform 3 not present) and liver.

Its subcellular location is the nucleus. In terms of biological role, transcriptional repressor. Can act with CTBP1 to synergistically repress transcription but CTPBP1 is not essential. Plays an important role in the specification and differentiation of lung epithelium. Acts cooperatively with FOXP4 to regulate lung secretory epithelial cell fate and regeneration by restricting the goblet cell lineage program; the function may involve regulation of AGR2. Essential transcriptional regulator of B-cell development. Involved in regulation of cardiac muscle cell proliferation. Involved in the columnar organization of spinal motor neurons. Promotes the formation of the lateral motor neuron column (LMC) and the preganglionic motor column (PGC) and is required for respective appropriate motor axon projections. The segment-appropriate generation of spinal cord motor columns requires cooperation with other Hox proteins. Can regulate PITX3 promoter activity; may promote midbrain identity in embryonic stem cell-derived dopamine neurons by regulating PITX3. Negatively regulates the differentiation of T follicular helper cells T(FH)s. Involved in maintenance of hair follicle stem cell quiescence; the function probably involves regulation of FGF18. Represses transcription of various pro-apoptotic genes and cooperates with NF-kappa B-signaling in promoting B-cell expansion by inhibition of caspase-dependent apoptosis. Binds to CSF1R promoter elements and is involved in regulation of monocyte differentiation and macrophage functions; repression of CSF1R in monocytes seems to involve NCOR2 as corepressor. Involved in endothelial cell proliferation, tube formation and migration indicative for a role in angiogenesis; the role in neovascularization seems to implicate suppression of SEMA5B. Can negatively regulate androgen receptor signaling. Acts as a transcriptional activator of the FBXL7 promoter; this activity is regulated by AURKA. Its function is as follows. Involved in transcriptional regulation in embryonic stem cells (ESCs). Stimulates expression of transcription factors that are required for pluripotency and decreases expression of differentiation-associated genes. Has distinct DNA-binding specifities as compared to the canonical form and preferentially binds DNA with the sequence 5'-CGATACAA-3' (or closely related sequences). Promotes ESC self-renewal and pluripotency. The polypeptide is Forkhead box protein P1 (Foxp1) (Mus musculus (Mouse)).